The following is a 562-amino-acid chain: Long-chain-fatty-acid--CoA ligase (562 aa).

213–224 (YTGGTTGVAKGA) provides a ligand contact to ATP.

The protein belongs to the ATP-dependent AMP-binding enzyme family. Mg(2+) is required as a cofactor.

It localises to the membrane. The catalysed reaction is a long-chain fatty acid + ATP + CoA = a long-chain fatty acyl-CoA + AMP + diphosphate. Its pathway is lipid metabolism; fatty acid beta-oxidation. Its function is as follows. Catalyzes the esterification, concomitant with transport, of exogenous long-chain fatty acids into metabolically active CoA thioesters for subsequent degradation or incorporation into phospholipids. This Yersinia pestis protein is Long-chain-fatty-acid--CoA ligase (fadD).